A 751-amino-acid polypeptide reads, in one-letter code: FAD-dependent monooxygenase atnA (751 aa).

A helical transmembrane segment spans residues 8–28 (LIVGGGVAGLSLAIMLEAYGF). FAD is bound by residues Glu-34, Gly-48, and Arg-109. Tyr-218 is a catalytic residue. Asp-311 and Ala-324 together coordinate FAD. Helical transmembrane passes span 446 to 466 (PLAT…PWSV), 481 to 501 (SEVF…LWVI), 508 to 528 (LLIS…YWGW), 563 to 583 (ALLP…ALAS), 590 to 610 (DWWP…STFL), 639 to 659 (IAVV…AALL), 663 to 683 (IISL…ALIV), and 706 to 726 (AWAV…LAGA).

Belongs to the paxM FAD-dependent monooxygenase family. FAD serves as cofactor.

The protein resides in the membrane. Its pathway is secondary metabolite biosynthesis; terpenoid biosynthesis. In terms of biological role, FAD-dependent monooxygenase; part of the gene cluster that mediates the biosynthesis of the meroterpenoids arthripenoids. The pathway begins with the HR-PKS atnH that catalyzes two chain-extension steps to form a reduced triketide, which then primes the SAT domain in the NR-PKS atnG to initiate three more cycles of extension to give a linear hexaketide corresponding to the polyketide part of arthripenoids. The FAD-dependent monooxygenase atnJ then performs an oxidative decarboxylation at C11 of the atnH/atnG product, via an electrophilic aromatic hydroxylation with concomitant ipso-decarboxylation. The membrane-bound polyprenyl transferase atnF then introduces a farnesyl group before the FAD-dependent monooxygenase atnK functions as the first epoxidase on terminal C12'-C13' olefin, followed by a second epoxidation on C7'-C8' catalyzed by atnA. The terpene cyclase/mutase atnI then initiates the sequential tricyclic ring formation through protonation of the terminal epoxide and catalyzes the regioselective and stereoselective 6/6/6-tricyclic ring formation. The cytochrome P450 monooxygenase atnM is responsible for hydroxylating both C1' and C10'. The next steps may involve ketoreduction and acetyl transfer by the ketoreductase atnB and the acetyltransferase atnC, and lead to the production of arthripenoid B, the final biosynthetic product of the atn cluster. The hydroquinone moiety in arthripenoid B is prone to undergo spontaneous oxidation to afford a benzoquinone compound, a key intermediate for generating structure diversity. For instance, addition of a cysteine followed by ring contraction gives arthripenoid A, tautomerization gives the main product arthripenoid C, addition of a molecular of water or amine affords arthripenoid D or E, respectively, and loss of one water forms arthripenoid F. The protein is FAD-dependent monooxygenase atnA of Arthrinium sp.